The sequence spans 142 residues: Peptide methionine sulfoxide reductase MsrB (142 aa).

The 124-residue stretch at 2-125 folds into the MsrB domain; sequence IKKNKEELND…NSAAIQFIPY (124 aa). Cysteine 114 (nucleophile) is an active-site residue.

The protein belongs to the MsrB Met sulfoxide reductase family.

The catalysed reaction is L-methionyl-[protein] + [thioredoxin]-disulfide + H2O = L-methionyl-(R)-S-oxide-[protein] + [thioredoxin]-dithiol. This chain is Peptide methionine sulfoxide reductase MsrB, found in Staphylococcus epidermidis (strain ATCC 35984 / DSM 28319 / BCRC 17069 / CCUG 31568 / BM 3577 / RP62A).